We begin with the raw amino-acid sequence, 746 residues long: Steroid receptor seven-up, isoform A (746 aa).

Residues 38–191 are disordered; sequence PPHSAWHEPP…HSQSSNSGSQ (154 aa). Low complexity predominate over residues 56–68; it reads AASAGPGTTTGSV. Residues 83–101 are compositionally biased toward polar residues; it reads QQSAVIKQDLSCPSLNQAG. A compositionally biased stretch (gly residues) spans 122–141; it reads GSAGGHHSGSGSGSGSGVNP. Over residues 158–170 the composition is skewed to polar residues; sequence MLTSIKGQPTGCG. The segment covering 171–191 has biased composition (low complexity); that stretch reads STTPSSQANSSHSQSSNSGSQ. Positions 197-272 form a DNA-binding region, nuclear receptor; that stretch reads NIECVVCGDK…MGMRREAVQR (76 aa). NR C4-type zinc fingers lie at residues 200-220 and 236-260; these read CVVCGDKSSGKHYGQFTCEGC and CRGSRNCPIDQHHRNQCQYCRLKKC. Residues 307 to 556 form the NR LBD domain; it reads YLSSYISLLL…PLVPSAGSAF (250 aa). Residues 579-645 form a disordered region; it reads QATPPSSGGG…APAPVPTSSV (67 aa). Residues 592-605 are compositionally biased toward polar residues; sequence GHNNSSGLGASLPT. Residues 606-645 are compositionally biased toward low complexity; sequence QSQSGSSSRNLTASPLSTSLATAPAPASASAPAPVPTSSV.

It belongs to the nuclear hormone receptor family. NR2 subfamily. As to expression, expressed in several embryonic tissues; dorsal vessel, oenocyte and fat body. CNS expression is dynamic and confined to temporally restricted subsections of the NB lineage; expressed in many NB and GMCs, but only a small number of neurons.

It is found in the nucleus. Its function is as follows. Receptor that is required in photoreceptors R1, R3, R4 and R6 during eye development; generation of the ganglion mother cell-2 (GMC-2) fate in the nb7-3 lineage, coinciding with the transition in the expression of HB to KR in the neuroblasts (NBs). This Drosophila melanogaster (Fruit fly) protein is Steroid receptor seven-up, isoform A (svp).